The primary structure comprises 124 residues: Protein Rev (124 aa).

A Phosphoserine; by host CK2 modification is found at Ser5. The segment at 19 to 27 (IIKILYQSN) is homomultimerization. The disordered stretch occupies residues 25–51 (QSNPYPSPEGTRKARRNRRRRWRARQK). The Nuclear localization signal and RNA-binding (RRE) motif lies at 35 to 51 (TRKARRNRRRRWRARQK). The span at 37-50 (KARRNRRRRWRARQ) shows a compositional bias: basic residues. A Nuclear export signal and binding to XPO1 motif is present at residues 74–85 (LELPELDKLSLQ). Over residues 90 to 106 (TQDVGTSNTSQPQTATG) the composition is skewed to polar residues. Residues 90–124 (TQDVGTSNTSQPQTATGETVPAGGNYSILGKGAKN) are disordered.

Belongs to the HIV-1 REV protein family. As to quaternary structure, homomultimer; when bound to the RRE. Multimeric assembly is essential for activity and may involve XPO1. Binds to human KPNB1, XPO1, TNPO1, RANBP5 and IPO7. Interacts with the viral Integrase. Interacts with human KHDRBS1. Interacts with human NAP1; this interaction decreases Rev multimerization and stimulates its activity. Interacts with human DEAD-box helicases DDX3 and DDX24; these interactions may serve for viral RNA export to the cytoplasm and packaging, respectively. Interacts with human PSIP1; this interaction may inhibit HIV-1 DNA integration by promoting dissociation of the Integrase-LEDGF/p75 complex. Asymmetrically arginine dimethylated at one site by host PRMT6. Methylation impairs the RNA-binding activity and export of viral RNA from the nucleus to the cytoplasm. Post-translationally, phosphorylated by protein kinase CK2. Presence of, and maybe binding to the N-terminus of the regulatory beta subunit of CK2 is necessary for CK2-mediated Rev's phosphorylation.

The protein resides in the host nucleus. The protein localises to the host nucleolus. It is found in the host cytoplasm. Functionally, escorts unspliced or incompletely spliced viral pre-mRNAs (late transcripts) out of the nucleus of infected cells. These pre-mRNAs carry a recognition sequence called Rev responsive element (RRE) located in the env gene, that is not present in fully spliced viral mRNAs (early transcripts). This function is essential since most viral proteins are translated from unspliced or partially spliced pre-mRNAs which cannot exit the nucleus by the pathway used by fully processed cellular mRNAs. Rev itself is translated from a fully spliced mRNA that readily exits the nucleus. Rev's nuclear localization signal (NLS) binds directly to KPNB1/Importin beta-1 without previous binding to KPNA1/Importin alpha-1. KPNB1 binds to the GDP bound form of RAN (Ran-GDP) and targets Rev to the nucleus. In the nucleus, the conversion from Ran-GDP to Ran-GTP dissociates Rev from KPNB1 and allows Rev's binding to the RRE in viral pre-mRNAs. Rev multimerization on the RRE via cooperative assembly exposes its nuclear export signal (NES) to the surface. Rev can then form a complex with XPO1/CRM1 and Ran-GTP, leading to nuclear export of the complex. Conversion from Ran-GTP to Ran-GDP mediates dissociation of the Rev/RRE/XPO1/RAN complex, so that Rev can return to the nucleus for a subsequent round of export. Beside KPNB1, also seems to interact with TNPO1/Transportin-1, RANBP5/IPO5 and IPO7/RANBP7 for nuclear import. The nucleoporin-like HRB/RIP is an essential cofactor that probably indirectly interacts with Rev to release HIV RNAs from the perinuclear region to the cytoplasm. This chain is Protein Rev, found in Pan (chimpanzees).